Here is a 137-residue protein sequence, read N- to C-terminus: MVAAKKHVPIVKKHKTTFARHQSDRFDRVGSSWRKPKGIDGRVRRRFRGTIRMPKIGYGSNKKTRFLTPSGHNAFLHNARTLSCAAGCSMQSTDPSAAEIATPVSSRKRIASSPARQADRCSRSRRSKFRPRRLRAS.

The interval P95 to S137 is disordered. Residues R123–S137 are compositionally biased toward basic residues.

Belongs to the eukaryotic ribosomal protein eL32 family.

The chain is Large ribosomal subunit protein eL32 (rpl32) from Trichoderma harzianum (Hypocrea lixii).